Reading from the N-terminus, the 636-residue chain is ABC transporter ATP-binding protein RamA (636 aa).

The next 5 helical transmembrane spans lie at 45-65 (VLVL…PLAL), 78-98 (AGWW…LDSA), 175-195 (LVDV…ALLL), 269-289 (GVLV…RLAA), and 297-317 (LLAV…ASLL). The ABC transmembrane type-1 domain maps to 45–322 (VLVLLCSVAA…AASLLGAIVR (278 aa)). The ABC transporter domain maps to 354–585 (LRLCGVRVLR…AGYREVFGAG (232 aa)). 386 to 393 (GRSGAGKS) contributes to the ATP binding site. Over residues 589–606 (GAGAGAGAGADAGAGADA) the composition is skewed to gly residues. The interval 589–636 (GAGAGAGAGADAGAGADAGPGPDSGAATAVGGSGPGPVRRPEPEEARP) is disordered. The span at 607–618 (GPGPDSGAATAV) shows a compositional bias: low complexity. The span at 627 to 636 (RRPEPEEARP) shows a compositional bias: basic and acidic residues.

It belongs to the ABC transporter superfamily.

It is found in the cell membrane. Its function is as follows. Probably involved in exporting SapB from the cell. Expression of the ram locus (ramA, ramB and ramR) induces rapid aerial mycelium formation in S.lividans. This Streptomyces coelicolor (strain ATCC BAA-471 / A3(2) / M145) protein is ABC transporter ATP-binding protein RamA.